The chain runs to 276 residues: Phosphatidylglycerol--prolipoprotein diacylglyceryl transferase (276 aa).

Transmembrane regions (helical) follow at residues 17-37 (LAIH…FFLA), 63-83 (ILFL…CLFY), and 95-115 (ILAV…VLAS). Arg146 lines the a 1,2-diacyl-sn-glycero-3-phospho-(1'-sn-glycerol) pocket. 3 helical membrane passes run 182–202 (SQVY…WLYA), 209–229 (GQVS…AEYF), and 235–255 (FLGI…PMIV).

This sequence belongs to the Lgt family.

The protein localises to the cell inner membrane. The catalysed reaction is L-cysteinyl-[prolipoprotein] + a 1,2-diacyl-sn-glycero-3-phospho-(1'-sn-glycerol) = an S-1,2-diacyl-sn-glyceryl-L-cysteinyl-[prolipoprotein] + sn-glycerol 1-phosphate + H(+). The protein operates within protein modification; lipoprotein biosynthesis (diacylglyceryl transfer). Functionally, catalyzes the transfer of the diacylglyceryl group from phosphatidylglycerol to the sulfhydryl group of the N-terminal cysteine of a prolipoprotein, the first step in the formation of mature lipoproteins. The chain is Phosphatidylglycerol--prolipoprotein diacylglyceryl transferase from Polaromonas sp. (strain JS666 / ATCC BAA-500).